Reading from the N-terminus, the 705-residue chain is Ribosomal RNA large subunit methyltransferase K/L (705 aa).

The 112-residue stretch at 43 to 154 (LMYQSLMWSR…KDTASIALDL (112 aa)) folds into the THUMP domain.

This sequence belongs to the methyltransferase superfamily. RlmKL family.

The protein resides in the cytoplasm. It catalyses the reaction guanosine(2445) in 23S rRNA + S-adenosyl-L-methionine = N(2)-methylguanosine(2445) in 23S rRNA + S-adenosyl-L-homocysteine + H(+). The enzyme catalyses guanosine(2069) in 23S rRNA + S-adenosyl-L-methionine = N(2)-methylguanosine(2069) in 23S rRNA + S-adenosyl-L-homocysteine + H(+). Specifically methylates the guanine in position 2445 (m2G2445) and the guanine in position 2069 (m7G2069) of 23S rRNA. The protein is Ribosomal RNA large subunit methyltransferase K/L of Erwinia tasmaniensis (strain DSM 17950 / CFBP 7177 / CIP 109463 / NCPPB 4357 / Et1/99).